Here is a 392-residue protein sequence, read N- to C-terminus: Zinc finger protein ham-2 (392 aa).

2 consecutive C2H2-type zinc fingers follow at residues phenylalanine 16 to histidine 39 and tyrosine 43 to histidine 66. A C2H2-type 3; degenerate zinc finger spans residues phenylalanine 72–leucine 95. Disordered regions lie at residues leucine 106–proline 130 and histidine 278–glutamate 303. Residues valine 112–arginine 123 show a composition bias toward polar residues. Low complexity predominate over residues serine 289 to glutamate 303.

It localises to the nucleus. Functionally, probable transcription factor that acts downstream of egl-15, to promote migration of the HSN motor neurons from the tail to the gonad primordium during HSN cell differentiation. This is Zinc finger protein ham-2 from Caenorhabditis elegans.